The primary structure comprises 283 residues: Bifunctional protein FolD (283 aa).

NADP(+)-binding positions include 166–168 and isoleucine 232; that span reads GAS.

The protein belongs to the tetrahydrofolate dehydrogenase/cyclohydrolase family. In terms of assembly, homodimer.

The enzyme catalyses (6R)-5,10-methylene-5,6,7,8-tetrahydrofolate + NADP(+) = (6R)-5,10-methenyltetrahydrofolate + NADPH. It catalyses the reaction (6R)-5,10-methenyltetrahydrofolate + H2O = (6R)-10-formyltetrahydrofolate + H(+). Its pathway is one-carbon metabolism; tetrahydrofolate interconversion. Functionally, catalyzes the oxidation of 5,10-methylenetetrahydrofolate to 5,10-methenyltetrahydrofolate and then the hydrolysis of 5,10-methenyltetrahydrofolate to 10-formyltetrahydrofolate. The chain is Bifunctional protein FolD from Hamiltonella defensa subsp. Acyrthosiphon pisum (strain 5AT).